Consider the following 161-residue polypeptide: MDQETVGNVVLLAIVTLISVVQNGFFAHKVEHESRTQNGRSFQRTGTLAFERVYTANQNCVDAYPTFLAVLWSAGLLCSQVPAAFAGLMYLFVRQKYFVGYLGERTQSTPGYIFGKRIILFLFLMSVAGIFNYYLIFFFGSDFENYIKTISTTISPLLLIP.

Residues 1–8 (MDQETVGN) are Lumenal-facing. The chain crosses the membrane as a helical span at residues 9-30 (VVLLAIVTLISVVQNGFFAHKV). Residues 31 to 52 (EHESRTQNGRSFQRTGTLAFER) are Cytoplasmic-facing. Residues 53-77 (VYTANQNCVDAYPTFLAVLWSAGLL) traverse the membrane as a helical segment. At 78–80 (CSQ) the chain is on the lumenal side. Residues 81 to 102 (VPAAFAGLMYLFVRQKYFVGYL) traverse the membrane as a helical segment. At 103-107 (GERTQ) the chain is on the cytoplasmic side. Residues 108–115 (STPGYIFG) lie within the membrane without spanning it. The helical transmembrane segment at 116–128 (KRIILFLFLMSVA) threads the bilayer. Over 129–161 (GIFNYYLIFFFGSDFENYIKTISTTISPLLLIP) the chain is Lumenal.

This sequence belongs to the MAPEG family. In terms of assembly, homotrimer. Interacts with LTC4S and ALOX5.

It localises to the nucleus membrane. The protein resides in the endoplasmic reticulum membrane. In terms of biological role, required for leukotriene biosynthesis by ALOX5 (5-lipoxygenase). Anchors ALOX5 to the membrane. Binds arachidonic acid, and could play an essential role in the transfer of arachidonic acid to ALOX5. Binds to MK-886, a compound that blocks the biosynthesis of leukotrienes. The chain is Arachidonate 5-lipoxygenase-activating protein (ALOX5AP) from Homo sapiens (Human).